The following is a 504-amino-acid chain: Maturase K (504 aa).

The protein belongs to the intron maturase 2 family. MatK subfamily.

It localises to the plastid. The protein localises to the chloroplast. Usually encoded in the trnK tRNA gene intron. Probably assists in splicing its own and other chloroplast group II introns. The sequence is that of Maturase K from Thlaspi arvense (Field penny-cress).